The sequence spans 1159 residues: WASH complex subunit 5 (1159 aa).

Residue Ser917 is modified to Phosphoserine.

This sequence belongs to the strumpellin family. In terms of assembly, component of the WASH core complex also described as WASH regulatory complex (SHRC) composed of WASH (WASHC1, WASH2P or WASH3P), WASHC2 (WASHC2A or WASHC2C), WASHC3, WASHC4 and WASHC5. The WASH core complex associates via WASHC2 with the F-actin-capping protein dimer (formed by CAPZA1, CAPZA2 or CAPZA3 and CAPZB) in a transient or substoichiometric manner which was initially described as WASH complex. Interacts with VCP, PI4K2A.

It localises to the cytoplasm. The protein localises to the cytosol. Its subcellular location is the endoplasmic reticulum. The protein resides in the early endosome. Functionally, acts as a component of the WASH core complex that functions as a nucleation-promoting factor (NPF) at the surface of endosomes, where it recruits and activates the Arp2/3 complex to induce actin polymerization, playing a key role in the fission of tubules that serve as transport intermediates during endosome sorting. May be involved in axonal outgrowth. Involved in cellular localization of ADRB2. Involved in cellular trafficking of BLOC-1 complex cargos such as ATP7A and VAMP7. In Pongo abelii (Sumatran orangutan), this protein is WASH complex subunit 5.